The primary structure comprises 270 residues: Phosphonoacetaldehyde hydrolase (270 aa).

The active-site Nucleophile is the Asp-11. Positions 11 and 13 each coordinate Mg(2+). The active-site Schiff-base intermediate with substrate is the Lys-53. Asp-187 contacts Mg(2+).

Belongs to the HAD-like hydrolase superfamily. PhnX family. Homodimer. It depends on Mg(2+) as a cofactor.

It catalyses the reaction phosphonoacetaldehyde + H2O = acetaldehyde + phosphate + H(+). Functionally, involved in phosphonate degradation. The chain is Phosphonoacetaldehyde hydrolase from Salmonella gallinarum (strain 287/91 / NCTC 13346).